Reading from the N-terminus, the 142-residue chain is Transcriptional regulator MraZ (142 aa).

2 SpoVT-AbrB domains span residues 5–47 and 76–119; these read THTP…PTPE and AHDE…DRVA.

The protein belongs to the MraZ family. As to quaternary structure, forms oligomers.

It is found in the cytoplasm. The protein localises to the nucleoid. The protein is Transcriptional regulator MraZ of Salinispora tropica (strain ATCC BAA-916 / DSM 44818 / JCM 13857 / NBRC 105044 / CNB-440).